Here is a 709-residue protein sequence, read N- to C-terminus: Phosphoribosylformylglycinamidine synthase subunit PurL (709 aa).

His36 is an active-site residue. Tyr39 and Lys80 together coordinate ATP. Glu82 contacts Mg(2+). Substrate-binding positions include 83 to 86 (SHNH) and Arg105. Catalysis depends on His84, which acts as the Proton acceptor. Asp106 is a binding site for Mg(2+). Residue Gln226 participates in substrate binding. Asp252 contacts Mg(2+). 294 to 296 (ETQ) is a substrate binding site. ATP is bound by residues Asp470 and Gly507. Ser510 contacts substrate.

It belongs to the FGAMS family. In terms of assembly, monomer. Part of the FGAM synthase complex composed of 1 PurL, 1 PurQ and 2 PurS subunits.

The protein resides in the cytoplasm. It catalyses the reaction N(2)-formyl-N(1)-(5-phospho-beta-D-ribosyl)glycinamide + L-glutamine + ATP + H2O = 2-formamido-N(1)-(5-O-phospho-beta-D-ribosyl)acetamidine + L-glutamate + ADP + phosphate + H(+). It participates in purine metabolism; IMP biosynthesis via de novo pathway; 5-amino-1-(5-phospho-D-ribosyl)imidazole from N(2)-formyl-N(1)-(5-phospho-D-ribosyl)glycinamide: step 1/2. In terms of biological role, part of the phosphoribosylformylglycinamidine synthase complex involved in the purines biosynthetic pathway. Catalyzes the ATP-dependent conversion of formylglycinamide ribonucleotide (FGAR) and glutamine to yield formylglycinamidine ribonucleotide (FGAM) and glutamate. The FGAM synthase complex is composed of three subunits. PurQ produces an ammonia molecule by converting glutamine to glutamate. PurL transfers the ammonia molecule to FGAR to form FGAM in an ATP-dependent manner. PurS interacts with PurQ and PurL and is thought to assist in the transfer of the ammonia molecule from PurQ to PurL. This Saccharolobus solfataricus (strain ATCC 35092 / DSM 1617 / JCM 11322 / P2) (Sulfolobus solfataricus) protein is Phosphoribosylformylglycinamidine synthase subunit PurL.